A 293-amino-acid chain; its full sequence is Methylsterol monooxygenase 1 (293 aa).

Transmembrane regions (helical) follow at residues Leu-55–Ile-75 and Val-100–Thr-120. Residues Cys-145 to Thr-274 enclose the Fatty acid hydroxylase domain. A Histidine box-1 motif is present at residues His-157 to His-161. The Histidine box-2 motif lies at His-170–His-174. A helical transmembrane segment spans residues Phe-199–Ile-219. Positions His-249–Met-255 match the Histidine box-3 motif.

The protein belongs to the sterol desaturase family. It depends on Fe cation as a cofactor. In terms of processing, ubiquitinated by MARCHF6, leading to proteasomal degradation.

The protein resides in the endoplasmic reticulum membrane. It carries out the reaction 4,4-dimethyl-5alpha-cholest-7-en-3beta-ol + 6 Fe(II)-[cytochrome b5] + 3 O2 + 5 H(+) = 4alpha-carboxy-4beta-methyl-5alpha-cholest-7-ene-3beta-ol + 6 Fe(III)-[cytochrome b5] + 4 H2O. It catalyses the reaction 4,4-dimethyl-5alpha-cholesta-8,24-dien-3beta-ol + 6 Fe(II)-[cytochrome b5] + 3 O2 + 5 H(+) = 4beta-methylzymosterol-4alpha-carboxylate + 6 Fe(III)-[cytochrome b5] + 4 H2O. The enzyme catalyses 4alpha-methylzymosterol + 6 Fe(II)-[cytochrome b5] + 3 O2 + 5 H(+) = 4alpha-carboxyzymosterol + 6 Fe(III)-[cytochrome b5] + 4 H2O. The catalysed reaction is 4alpha-methyl-5alpha-cholest-7-en-3beta-ol + 6 Fe(II)-[cytochrome b5] + 3 O2 + 5 H(+) = 4alpha-carboxy-5alpha-cholest-7-en-3beta-ol + 6 Fe(III)-[cytochrome b5] + 4 H2O. It carries out the reaction 4,4-dimethyl-5alpha-cholest-8-en-3beta-ol + 6 Fe(II)-[cytochrome b5] + 3 O2 + 5 H(+) = 4alpha-carboxy-4beta-methyl-5alpha-cholest-8-en-3beta-ol + 6 Fe(III)-[cytochrome b5] + 4 H2O. It catalyses the reaction 4alpha-methyl-5alpha-cholest-8-en-3beta-ol + 6 Fe(II)-[cytochrome b5] + 3 O2 + 5 H(+) = 4alpha-carboxy-5alpha-cholest-8-ene-3beta-ol + 6 Fe(III)-[cytochrome b5] + 4 H2O. It functions in the pathway steroid biosynthesis; zymosterol biosynthesis; zymosterol from lanosterol: step 3/6. The protein operates within steroid biosynthesis; cholesterol biosynthesis. Its function is as follows. Catalyzes the three-step monooxygenation required for the demethylation of 4,4-dimethyl and 4alpha-methylsterols, which can be subsequently metabolized to cholesterol. The protein is Methylsterol monooxygenase 1 (MSMO1) of Macaca fascicularis (Crab-eating macaque).